Reading from the N-terminus, the 347-residue chain is NADH-ubiquinone oxidoreductase chain 2 (347 aa).

Transmembrane regions (helical) follow at residues 1–21 (MNPLTFAMILLTIMLGTTIVM), 25–45 (HWLVVWIGFEMNMLAVIPVLM), 59–79 (YFLTQATASMLLMLAIVINLI), 96–116 (IIMTLALAMKLGLAPFHFWVP), 122–142 (IQLSSGLILLTWQKLAPISIL), 150–170 (NLNLLLAMSILSVAIGGWGGL), 201–221 (ALLNLVIYILLTTTTFSVFML), 242–262 (TALLMTMLSLGGLPPLSGFLP), 274–294 (NSVIVPTTMAITALLNLYFYM), and 326–346 (LSPLIILSTLILPLSPILTLL).

The protein belongs to the complex I subunit 2 family. In terms of assembly, core subunit of respiratory chain NADH dehydrogenase (Complex I) which is composed of 45 different subunits. Interacts with TMEM242.

It localises to the mitochondrion inner membrane. The enzyme catalyses a ubiquinone + NADH + 5 H(+)(in) = a ubiquinol + NAD(+) + 4 H(+)(out). Core subunit of the mitochondrial membrane respiratory chain NADH dehydrogenase (Complex I) which catalyzes electron transfer from NADH through the respiratory chain, using ubiquinone as an electron acceptor. Essential for the catalytic activity and assembly of complex I. This is NADH-ubiquinone oxidoreductase chain 2 from Eidolon helvum (Straw-colored fruit bat).